The primary structure comprises 182 residues: Ribosome-recycling factor (182 aa).

It belongs to the RRF family.

The protein localises to the cytoplasm. In terms of biological role, responsible for the release of ribosomes from messenger RNA at the termination of protein biosynthesis. May increase the efficiency of translation by recycling ribosomes from one round of translation to another. The chain is Ribosome-recycling factor from Cyanothece sp. (strain PCC 7425 / ATCC 29141).